The sequence spans 599 residues: Estrogen receptor (599 aa).

The segment at 1-188 is modulating (transactivation AF-1); mediates interaction with MACROD1; it reads MTMTLHTKAS…IMESAKETRY (188 aa). Ser-10 carries an O-linked (GlcNAc) serine glycan. Residues 35-47 form a required for interaction with NCOA1 region; sequence MERALGEVYVDNS. Positions 35 to 178 are interaction with DDX5; self-association; sequence MERALGEVYV…LSSSNEKGNM (144 aa). O-linked (GlcNAc) threonine glycosylation occurs at Thr-50. A phosphoserine; by CDK2 mark is found at Ser-108 and Ser-110. Ser-122 carries the post-translational modification Phosphoserine. The disordered stretch occupies residues 147–175; the sequence is DTGPPAFYRSNSDNRRQNGRERLSSSNEK. Over residues 158 to 169 the composition is skewed to basic and acidic residues; that stretch reads SDNRRQNGRERL. A Phosphoserine; by CK2 modification is found at Ser-171. 2 NR C4-type zinc fingers span residues 189 to 209 and 225 to 249; these read CAVCNDYASGYHYGVWSCEGC and CPATNQCTIDKNRRKSCQACRLRKC. A DNA-binding region (nuclear receptor) is located at residues 189 to 254; that stretch reads CAVCNDYASG…RLRKCYEVGM (66 aa). A mediates interaction with DNTTIP2 region spans residues 189-314; it reads CAVCNDYASG…TKKNSPALSL (126 aa). The interval 255–314 is hinge; that stretch reads MKGGIRKDRRGGRMLKHKRQRDDLEGRNEMGASGDMRAANLWPSPLVIKHTKKNSPALSL. Arg-264 is subject to Asymmetric dimethylarginine; by PRMT1. The interval 266 to 599 is interaction with AKAP13; sequence GRMLKHKRQR…PEAEGFPNTI (334 aa). A self-association region spans residues 268–599; the sequence is MLKHKRQRDD…PEAEGFPNTI (332 aa). The 237-residue stretch at 315–551 folds into the NR LBD domain; the sequence is TADQMVSALL…DLLLEMLDAH (237 aa). Residues 315–599 form a transactivation AF-2 region; it reads TADQMVSALL…PEAEGFPNTI (285 aa). The 17beta-estradiol site is built by Glu-357 and Arg-398. Cys-451 is lipidated: S-palmitoyl cysteine. Residue His-528 coordinates 17beta-estradiol. Tyr-541 carries the post-translational modification Phosphotyrosine; by Tyr-kinases. The segment at 557–581 is disordered; that stretch reads ASRMGVPPEEPSQTQLATTSSTSAH. The segment covering 568–581 has biased composition (low complexity); it reads SQTQLATTSSTSAH. The O-linked (GlcNAc) threonine glycan is linked to Thr-575.

It belongs to the nuclear hormone receptor family. NR3 subfamily. As to quaternary structure, interacts with BCAS3. Binds DNA as a homodimer. Can form a heterodimer with ESR2. Interacts with coactivator NCOA5. Interacts with PELP1, the interaction is enhanced by 17-beta-estradiol; the interaction increases ESR1 transcriptional activity. Interacts with NCOA7; the interaction is ligand-inducible. Interacts with AKAP13, CUEDC2, HEXIM1, KDM5A, MAP1S, SMARD1, and UBE1C. Interacts with MUC1; the interaction is stimulated by 7 beta-estradiol (E2) and enhances ESR1-mediated transcription. Interacts with DNTTIP2, and UIMC1. Interacts with KMT2D/MLL2. Interacts with ATAD2; the interaction is enhanced by estradiol. Interacts with KIF18A and LDB1. Interacts with RLIM (via its C-terminus). Interacts with MACROD1. Interacts with SH2D4A and PLCG. Interacts with SH2D4A; the interaction blocks binding to PLCG and inhibits estrogen-induced cell proliferation. Interacts with DYNLL1. Interacts with CCDC62; the interaction requires estradiol and appears to enhance the transcription of target genes. Interacts with NR2C1; the interaction prevents homodimerization of ESR1 and suppresses its transcriptional activity and cell growth. Interacts with DNAAF4. Interacts with PRMT2. Interacts with RBFOX2. Interacts with EP300; the interaction is estrogen-dependent and enhanced by CITED1. Interacts with CITED1; the interaction is estrogen-dependent. Interacts with FAM120B, FOXL2, PHB2 and SLC30A9. Interacts with coactivators NCOA3 and NCOA6. Interacts with STK3/MST2 only in the presence of SAV1 and vice-versa. Binds to CSNK1D. Interacts with NCOA2; NCOA2 can interact with ESR1 AF-1 and AF-2 domains simultaneously and mediate their transcriptional synergy. Interacts with DDX5. Interacts with NCOA1; the interaction seems to require a self-association of N-terminal and C-terminal regions. Interacts with ZNF366, DDX17, NFKB1, RELA, SP1 and SP3. Interacts with NRIP1. Interacts with GPER1; the interaction occurs in an estrogen-dependent manner. Interacts with CLOCK and the interaction is stimulated by estrogen. Interacts with BCAS3. Interacts with TRIP4 (ufmylated); estrogen dependent. Interacts with LMTK3; the interaction phosphorylates ESR1 (in vitro) and protects it against proteasomal degradation. Interacts with CCAR2 (via N-terminus) in a ligand-independent manner. Interacts with ZFHX3. Interacts with SFR1 in a ligand-dependent and -independent manner. Interacts with DCAF13, LATS1 and DCAF1; regulates ESR1 ubiquitination and ubiquitin-mediated proteasomal degradation. Interacts (via DNA-binding domain) with POU4F2 isoform 2 (C-terminus); this interaction increases the estrogen receptor ESR1 transcriptional activity in a DNA- and ligand 17-beta-estradiol-independent manner. Interacts with ESRRB isoform 1. Interacts with UBE3A and WBP2. Interacts with GTF2B. Interacts with RBM39. In the absence of hormonal ligand, interacts with TACC1. Interacts with PI3KR1 or PI3KR2 and PTK2/FAK1. Interacts with SRC. Interacts with BAG1; the interaction is promoted in the absence of estradiol (17-beta-estradiol/E2). Interacts with and ubiquitinated by STUB1; the interaction is promoted in the absence of estradiol (17-beta-estradiol/E2). Interacts with NEDD8. Phosphorylated by cyclin A/CDK2 and CK1. Phosphorylation probably enhances transcriptional activity. Dephosphorylation at Ser-122 by PPP5C inhibits its transactivation activity. Phosphorylated by LMTK3 (in vitro). Post-translationally, ubiquitinated. Deubiquitinated by OTUB1. In terms of processing, palmitoylated at Cys-451 by ZDHHC7 and ZDHHC21. This modification is required for plasma membrane targeting and for rapid intracellular signaling via ERK and AKT kinases and cAMP generation, but not for signaling mediated by the nuclear hormone receptor. Ubiquitinated; regulated by LATS1 via DCAF1 it leads to ESR1 proteasomal degradation. Deubiquitinated by OTUB1. Ubiquitinated by STUB1/CHIP; in the CA1 hippocampal region following loss of endogenous circulating estradiol (17-beta-estradiol/E2). Ubiquitinated by UBR5, leading to its degradation: UBR5 specifically recognizes and binds ligand-bound ESR1 when it is not associated with coactivators (NCOAs). In presence of NCOAs, the UBR5-degron is not accessible, preventing its ubiquitination and degradation. Post-translationally, dimethylated by PRMT1 at Arg-264. The methylation may favor cytoplasmic localization. Demethylated by JMJD6 at Arg-264.

Its subcellular location is the nucleus. It localises to the cytoplasm. It is found in the golgi apparatus. The protein resides in the cell membrane. Nuclear hormone receptor. The steroid hormones and their receptors are involved in the regulation of eukaryotic gene expression and affect cellular proliferation and differentiation in target tissues. Ligand-dependent nuclear transactivation involves either direct homodimer binding to a palindromic estrogen response element (ERE) sequence or association with other DNA-binding transcription factors, such as AP-1/c-Jun, c-Fos, ATF-2, Sp1 and Sp3, to mediate ERE-independent signaling. Ligand binding induces a conformational change allowing subsequent or combinatorial association with multiprotein coactivator complexes through LXXLL motifs of their respective components. Mutual transrepression occurs between the estrogen receptor (ER) and NF-kappa-B in a cell-type specific manner. Decreases NF-kappa-B DNA-binding activity and inhibits NF-kappa-B-mediated transcription from the IL6 promoter and displace RELA/p65 and associated coregulators from the promoter. Recruited to the NF-kappa-B response element of the CCL2 and IL8 promoters and can displace CREBBP. Present with NF-kappa-B components RELA/p65 and NFKB1/p50 on ERE sequences. Can also act synergistically with NF-kappa-B to activate transcription involving respective recruitment adjacent response elements; the function involves CREBBP. Can activate the transcriptional activity of TFF1. Also mediates membrane-initiated estrogen signaling involving various kinase cascades. Essential for MTA1-mediated transcriptional regulation of BRCA1 and BCAS3. Maintains neuronal survival in response to ischemic reperfusion injury when in the presence of circulating estradiol (17-beta-estradiol/E2). The protein is Estrogen receptor (Esr1) of Mus musculus (Mouse).